Here is a 353-residue protein sequence, read N- to C-terminus: Variable large protein 12 (353 aa).

A signal peptide spans 1 to 18 (MRKRISAIIMTLFMVLAS). C19 carries the N-palmitoyl cysteine lipid modification. The S-diacylglycerol cysteine moiety is linked to residue C19.

This sequence belongs to the variable large protein (Vlp) family. Beta subfamily.

It localises to the cell outer membrane. The Vlp and Vsp proteins are antigenically distinct proteins, only one vlp or vsp gene is transcriptionally active at any one time. Switching between these genes is a mechanism of host immune response evasion. The sequence is that of Variable large protein 12 from Borrelia hermsii.